Reading from the N-terminus, the 380-residue chain is MGIHGLAKLIADHAPSAIKEHEIKSYFGRKIAIDASMCIYQFLIAVRQDGNVLQNEDGETTSHLMGMFYRTIRMLESGIKPVYVFDGKPPQLKSGELEKRVERRAEAEKLLAQAQEAGEQENIDKFSKRLVKVTKQHNEECKKLLSLMGVPYIEAPCEAEASCAALVKAGKVYATATEDMDGLTFGTTVLLRHLTASEAKKLPIQEFHFSRILQDMELTHQQFIDLCILLGCDYCGTIKGIGPKRAIDLIKQHGSIEEILENIDPNKHPAPEDWLYKEARGLFLEPEVVDGTSVDLKWNEPDEDGLIQFMCAEKQFSEDRIRNGCKKITKSRQGSTQGRLDTFFTVTGSISSKRKEPETKGSAKKKQKTSATPGKFKKGK.

Residues 1-104 (MGIHGLAKLI…GELEKRVERR (104 aa)) form an N-domain region. D34 is a Mg(2+) binding site. R47 and R70 together coordinate DNA. Mg(2+) is bound by residues D86, E158, E160, D179, and D181. Residues 122–253 (NIDKFSKRLV…KRAIDLIKQH (132 aa)) are I-domain. Residue E158 participates in DNA binding. DNA is bound by residues G231 and D233. Residue D233 coordinates Mg(2+). The segment at 336–344 (TQGRLDTFF) is interaction with PCNA. Residues 346–380 (VTGSISSKRKEPETKGSAKKKQKTSATPGKFKKGK) form a disordered region.

It belongs to the XPG/RAD2 endonuclease family. FEN1 subfamily. Interacts with PCNA. Three molecules of fen1 bind to one PCNA trimer with each molecule binding to one PCNA monomer. PCNA stimulates the nuclease activity without altering cleavage specificity. Mg(2+) serves as cofactor. Post-translationally, phosphorylated. Phosphorylation upon DNA damage induces relocalization to the nuclear plasma.

It localises to the nucleus. It is found in the nucleolus. The protein resides in the nucleoplasm. Its subcellular location is the mitochondrion. Structure-specific nuclease with 5'-flap endonuclease and 5'-3' exonuclease activities involved in DNA replication and repair. During DNA replication, cleaves the 5'-overhanging flap structure that is generated by displacement synthesis when DNA polymerase encounters the 5'-end of a downstream Okazaki fragment. It enters the flap from the 5'-end and then tracks to cleave the flap base, leaving a nick for ligation. Also involved in the long patch base excision repair (LP-BER) pathway, by cleaving within the apurinic/apyrimidinic (AP) site-terminated flap. Acts as a genome stabilization factor that prevents flaps from equilibrating into structures that lead to duplications and deletions. Also possesses 5'-3' exonuclease activity on nicked or gapped double-stranded DNA, and exhibits RNase H activity. Also involved in replication and repair of rDNA and in repairing mitochondrial DNA. The sequence is that of Flap endonuclease 1 (fen1) from Danio rerio (Zebrafish).